We begin with the raw amino-acid sequence, 67 residues long: Small ribosomal subunit protein eS31 (67 aa).

Zn(2+) contacts are provided by cysteine 31, cysteine 34, cysteine 49, and cysteine 52. The C4-type zinc-finger motif lies at 31 to 52 (CPKCGAGVFMAEHLNRFACGKC).

It belongs to the eukaryotic ribosomal protein eS31 family. Part of the 30S ribosomal subunit. The cofactor is Zn(2+).

This chain is Small ribosomal subunit protein eS31, found in Methanococcus maripaludis (strain C7 / ATCC BAA-1331).